Consider the following 234-residue polypeptide: Probable ascorbate-specific transmembrane electron transporter 1 (234 aa).

Topologically, residues 1–9 (MGLGVRAAP) are cytoplasmic. A helical membrane pass occupies residues 10–30 (FTYVAHALAVAAATMVLVWCI). In terms of domain architecture, Cytochrome b561 spans 13-217 (VAHALAVAAA…FGASVVVAAV (205 aa)). Residues 31–48 (HFRGGLAFEATNKNLIFN) lie on the Extracellular side of the membrane. Residues 49–69 (VHPVLMLIGYIILGSEAIMVY) traverse the membrane as a helical segment. Histidine 50 lines the heme b pocket. 65 to 73 (AIMVYKVLP) is an L-ascorbate binding site. The Cytoplasmic portion of the chain corresponds to 70–82 (KVLPTWKHDTTKL). The chain crosses the membrane as a helical span at residues 83-103 (IHLILHAIALVFGAVGIYCAF). 2 residues coordinate heme b: histidine 84 and histidine 118. At 104–121 (KFHNESGIANLYSLHSWL) the chain is on the extracellular side. A monodehydro-L-ascorbate radical-binding site is contributed by 114 to 123 (LYSLHSWLGI). A helical transmembrane segment spans residues 122-142 (GIGTICLYGIQWIFGFVAFFF). Over 143–151 (PRASPSVRK) the chain is Cytoplasmic. A helical membrane pass occupies residues 152–172 (GVLPWHILFGLFVYILALATA). Heme b is bound at residue histidine 157. Residues 173–194 (ELGFLEKLTFLQSSGLDKYGAE) are Extracellular-facing. The chain crosses the membrane as a helical span at residues 195 to 215 (AFLVNFTALIVVLFGASVVVA). Residues 216 to 234 (AVSPARVEEPHEYAPIPES) lie on the Cytoplasmic side of the membrane.

It depends on heme b as a cofactor.

The protein localises to the membrane. In terms of biological role, two-heme-containing cytochrome. Catalyzes ascorbate-dependent trans-membrane electron transfer by utilizing a concerted H(+)/e(-) transfer mechanism. The polypeptide is Probable ascorbate-specific transmembrane electron transporter 1 (Oryza sativa subsp. japonica (Rice)).